The chain runs to 225 residues: Biosynthetic peptidoglycan transglycosylase (225 aa).

Residues 8-28 (VLLIFIGAILLIQLWIFSSLV) traverse the membrane as a helical segment.

Belongs to the glycosyltransferase 51 family.

The protein resides in the cell inner membrane. It catalyses the reaction [GlcNAc-(1-&gt;4)-Mur2Ac(oyl-L-Ala-gamma-D-Glu-L-Lys-D-Ala-D-Ala)](n)-di-trans,octa-cis-undecaprenyl diphosphate + beta-D-GlcNAc-(1-&gt;4)-Mur2Ac(oyl-L-Ala-gamma-D-Glu-L-Lys-D-Ala-D-Ala)-di-trans,octa-cis-undecaprenyl diphosphate = [GlcNAc-(1-&gt;4)-Mur2Ac(oyl-L-Ala-gamma-D-Glu-L-Lys-D-Ala-D-Ala)](n+1)-di-trans,octa-cis-undecaprenyl diphosphate + di-trans,octa-cis-undecaprenyl diphosphate + H(+). It participates in cell wall biogenesis; peptidoglycan biosynthesis. Its function is as follows. Peptidoglycan polymerase that catalyzes glycan chain elongation from lipid-linked precursors. This is Biosynthetic peptidoglycan transglycosylase from Acinetobacter baumannii (strain ACICU).